A 64-amino-acid polypeptide reads, in one-letter code: Beta-defensin 2 (64 aa).

The first 22 residues, Met-1–Thr-22, serve as a signal peptide directing secretion. 3 disulfide bridges follow: Cys-31–Cys-60, Cys-38–Cys-53, and Cys-43–Cys-61.

Belongs to the beta-defensin family.

It is found in the secreted. Its function is as follows. Has bactericidal activity. The chain is Beta-defensin 2 (DEFB2) from Ovis aries (Sheep).